A 139-amino-acid polypeptide reads, in one-letter code: Drosulfakinins (139 aa).

Positions 1 to 35 are cleaved as a signal peptide; sequence MGHRGMGCAHFATMAMPLWALTFYLLVVLPVPSQT. A propeptide spanning residues 36–71 is cleaved from the precursor; sequence ASVEVGKEERRLQDLDPKMGSEAGNTDGLSLARFGS. Phe80 carries the post-translational modification Phenylalanine amide. Positions 81–109 are excised as a propeptide; the sequence is GHRVPIISRPVIPIELDLLMDNEDDRTMS. The residue at position 115 (Tyr115) is a Sulfotyrosine. At Phe120 the chain carries Phenylalanine amide. Residue Tyr132 is modified to Sulfotyrosine. Phe137 is subject to Phenylalanine amide.

It belongs to the gastrin/cholecystokinin family.

The protein localises to the secreted. Functionally, drosulfakinin-0 (DSK 0) plays diverse biological roles including regulating gut muscle contraction in adults but not in larvae. This Drosophila pseudoobscura pseudoobscura (Fruit fly) protein is Drosulfakinins.